The sequence spans 308 residues: Methionyl-tRNA formyltransferase (308 aa).

S109–P112 contributes to the (6S)-5,6,7,8-tetrahydrofolate binding site.

Belongs to the Fmt family.

The enzyme catalyses L-methionyl-tRNA(fMet) + (6R)-10-formyltetrahydrofolate = N-formyl-L-methionyl-tRNA(fMet) + (6S)-5,6,7,8-tetrahydrofolate + H(+). Functionally, attaches a formyl group to the free amino group of methionyl-tRNA(fMet). The formyl group appears to play a dual role in the initiator identity of N-formylmethionyl-tRNA by promoting its recognition by IF2 and preventing the misappropriation of this tRNA by the elongation apparatus. This Methylococcus capsulatus (strain ATCC 33009 / NCIMB 11132 / Bath) protein is Methionyl-tRNA formyltransferase.